The sequence spans 552 residues: CTP synthase (552 aa).

The interval 1 to 267 (MAKFIFVTGG…AEQTLKLLRM (267 aa)) is amidoligase domain. Ser-13 is a binding site for CTP. Ser-13 provides a ligand contact to UTP. ATP is bound by residues 14–19 (SIGKGI) and Asp-71. Residues Asp-71 and Glu-141 each coordinate Mg(2+). Residues 148-150 (DIE), 188-193 (KTKPTQ), and Lys-224 each bind CTP. UTP is bound by residues 188 to 193 (KTKPTQ) and Lys-224. In terms of domain architecture, Glutamine amidotransferase type-1 spans 292-534 (DIAIVGKYVQ…IQAAGNHKSQ (243 aa)). Gly-354 provides a ligand contact to L-glutamine. Catalysis depends on Cys-381, which acts as the Nucleophile; for glutamine hydrolysis. Residues 382–385 (LGMQ), Glu-405, and Arg-462 each bind L-glutamine. Residues His-507 and Glu-509 contribute to the active site. The interval 533–552 (SQPISDELDNQSTEMSISLS) is disordered.

The protein belongs to the CTP synthase family. As to quaternary structure, homotetramer.

The enzyme catalyses UTP + L-glutamine + ATP + H2O = CTP + L-glutamate + ADP + phosphate + 2 H(+). The catalysed reaction is L-glutamine + H2O = L-glutamate + NH4(+). It carries out the reaction UTP + NH4(+) + ATP = CTP + ADP + phosphate + 2 H(+). It participates in pyrimidine metabolism; CTP biosynthesis via de novo pathway; CTP from UDP: step 2/2. Its activity is regulated as follows. Allosterically activated by GTP, when glutamine is the substrate; GTP has no effect on the reaction when ammonia is the substrate. The allosteric effector GTP functions by stabilizing the protein conformation that binds the tetrahedral intermediate(s) formed during glutamine hydrolysis. Inhibited by the product CTP, via allosteric rather than competitive inhibition. Functionally, catalyzes the ATP-dependent amination of UTP to CTP with either L-glutamine or ammonia as the source of nitrogen. Regulates intracellular CTP levels through interactions with the four ribonucleotide triphosphates. The protein is CTP synthase of Picosynechococcus sp. (strain ATCC 27264 / PCC 7002 / PR-6) (Agmenellum quadruplicatum).